The sequence spans 592 residues: Protein kinase C zeta type (592 aa).

Positions 15–98 (RVRLKAHYGG…EVLIIHVFPS (84 aa)) constitute a PB1 domain. The segment at 79 to 145 (AFRLACQGRD…KRFNRRAYCG (67 aa)) is interaction with SQSTM1. A Phorbol-ester/DAG-type zinc finger spans residues 130-180 (GHLFQAKRFNRRAYCGQCSERIWGLARQGYRCINCKLLVHKRCHVLVPLTC). The Protein kinase domain maps to 252 to 518 (FDLIRVIGRG…FSDIKSHAFF (267 aa)). Residues 258–266 (IGRGSYAKV) and Lys-281 contribute to the ATP site. Catalysis depends on Asp-376, which acts as the Proton acceptor. At Thr-410 the chain carries Phosphothreonine; by PDPK1 and PI3K. In terms of domain architecture, AGC-kinase C-terminal spans 519 to 590 (RSIDWDLLEK…INPLLLSAEE (72 aa)). Thr-560 is modified (phosphothreonine). Ser-591 carries the phosphoserine modification.

Belongs to the protein kinase superfamily. AGC Ser/Thr protein kinase family. PKC subfamily. In terms of assembly, interacts with PARD6A, PARD6B and PARD6G. Part of a complex with PARD3, PARD6A or PARD6B or PARD6G and CDC42 or RAC1. Interacts with ADAP1/CENTA1. Forms a ternary complex with SQSTM1 and KCNAB2. Forms another ternary complex with SQSTM1 and GABRR3. Forms a complex with SQSTM1 and MAP2K5. Interacts (via the protein kinase domain) with WWC1. Forms a tripartite complex with WWC1 and DDR1, but predominantly in the absence of collagen. Component of the Par polarity complex, composed of at least phosphorylated PRKCZ, PARD3 and TIAM1. Interacts with PDPK1 (via N-terminal region). Interacts with WDFY2 (via WD repeats 1-3). Interacts with VAMP2. Forms a complex with WDFY2 and VAMP2. Interacts with APPL1. Interacts with WWC1, WWC2 and WWC3. CDH5 is required for its phosphorylation at Thr-410. Phosphorylated by protein kinase PDPK1; phosphorylation is inhibited by the apoptotic C-terminal cleavage product of PKN2. Phosphorylation at Thr-410 by PI3K activates the kinase. In terms of tissue distribution, isoform 1: In brain, expressed in hippocampus, neocortex and cerebellum (at protein level). Also expressed in lung, liver, kidney, testis and to a lesser extent in pancreas, intestine and skin (at protein level). Isoform 2: Specifically expressed in brain where it localizes to the hippocampus, neocortex and cerebellum (at protein level).

Its subcellular location is the cytoplasm. The protein resides in the endosome. The protein localises to the cell junction. It localises to the membrane. It catalyses the reaction L-seryl-[protein] + ATP = O-phospho-L-seryl-[protein] + ADP + H(+). It carries out the reaction L-threonyl-[protein] + ATP = O-phospho-L-threonyl-[protein] + ADP + H(+). With respect to regulation, atypical PKCs (PRKCI and PRKCZ) exhibit an elevated basal enzymatic activity (that may be due to the interaction with SMG1 or SQSTM1) and are not regulated by diacylglycerol, phosphatidylserine, phorbol esters or calcium ions. Two specific sites, Thr-410 (activation loop of the kinase domain) and Thr-560 (turn motif), need to be phosphorylated for its full activation. Phosphatidylinositol 3,4,5-trisphosphate might be a physiological activator. Isoform 2: Constitutively active. Calcium- and diacylglycerol-independent serine/threonine-protein kinase that functions in phosphatidylinositol 3-kinase (PI3K) pathway and mitogen-activated protein (MAP) kinase cascade, and is involved in NF-kappa-B activation, mitogenic signaling, cell proliferation, cell polarity, inflammatory response and maintenance of long-term potentiation (LTP). Upon lipopolysaccharide (LPS) treatment in macrophages, or following mitogenic stimuli, functions downstream of PI3K to activate MAP2K1/MEK1-MAPK1/ERK2 signaling cascade independently of RAF1 activation. Required for insulin-dependent activation of AKT3, but may function as an adapter rather than a direct activator. Upon insulin treatment may act as a downstream effector of PI3K and contribute to the activation of translocation of the glucose transporter SLC2A4/GLUT4 and subsequent glucose transport in adipocytes. In EGF-induced cells, binds and activates MAP2K5/MEK5-MAPK7/ERK5 independently of its kinase activity and can activate JUN promoter through MEF2C. Through binding with SQSTM1/p62, functions in interleukin-1 signaling and activation of NF-kappa-B with the specific adapters RIPK1 and TRAF6. Participates in TNF-dependent transactivation of NF-kappa-B by phosphorylating and activating IKBKB kinase, which in turn leads to the degradation of NF-kappa-B inhibitors. In migrating astrocytes, forms a cytoplasmic complex with PARD6A and is recruited by CDC42 to function in the establishment of cell polarity along with the microtubule motor and dynein. In association with FEZ1, stimulates neuronal differentiation in PC12 cells. In the inflammatory response, is required for the T-helper 2 (Th2) differentiation process, including interleukin production, efficient activation of JAK1 and the subsequent phosphorylation and nuclear translocation of STAT6. May be involved in development of allergic airway inflammation (asthma), a process dependent on Th2 immune response. In the NF-kappa-B-mediated inflammatory response, can relieve SETD6-dependent repression of NF-kappa-B target genes by phosphorylating the RELA subunit at 'Ser-311'. Phosphorylates VAMP2 in vitro. Phosphorylates and activates LRRK1, which phosphorylates RAB proteins involved in intracellular trafficking. Its function is as follows. Involved in late synaptic long term potentiation phase in CA1 hippocampal cells and long term memory maintenance. The chain is Protein kinase C zeta type (Prkcz) from Rattus norvegicus (Rat).